Here is a 483-residue protein sequence, read N- to C-terminus: Transmembrane protein 39B (483 aa).

An N-linked (GlcNAc...) asparagine glycan is attached at asparagine 9. 7 helical membrane-spanning segments follow: residues 76-96 (HLLFELQLFFCHLIALFVHYI), 114-134 (TSLNFHLIDFNVLTLTTIVLA), 158-182 (LLVATRFAVLTGTGWSLCRSIILLF), 187-207 (FFNLLFLCYPFGMYIPFLQLG), 281-301 (EVLLSSMLSAYYVAFVPVWFV), 414-434 (VLNILTTLEGVLIFYQLYSLL), and 440-460 (HHTISLALILFSNYYAFFKLL).

Belongs to the TMEM39 family.

It localises to the endoplasmic reticulum membrane. Its function is as follows. May protect the cells against DNA damage caused by exposure to the cold-warming stress and facilitates tissue damage repair during the recovery phase. In Xenopus tropicalis (Western clawed frog), this protein is Transmembrane protein 39B.